Consider the following 574-residue polypeptide: K(+)/H(+) antiporter NhaP2 (574 aa).

The next 13 membrane-spanning stretches (helical) occupy residues isoleucine 6 to methionine 26, isoleucine 34 to leucine 54, tyrosine 58 to methionine 78, valine 87 to threonine 107, valine 109 to valine 129, isoleucine 173 to isoleucine 193, phenylalanine 196 to valine 216, leucine 219 to serine 239, leucine 242 to threonine 262, valine 271 to leucine 291, isoleucine 299 to valine 319, tryptophan 335 to methionine 355, and leucine 359 to valine 379. Residues serine 405–glutamine 486 enclose the RCK C-terminal domain.

The protein belongs to the monovalent cation:proton antiporter 1 (CPA1) transporter (TC 2.A.36) family. NhaP2 subfamily.

It localises to the cell inner membrane. It catalyses the reaction K(+)(in) + H(+)(out) = K(+)(out) + H(+)(in). Its function is as follows. K(+)/H(+) antiporter that extrudes potassium in exchange for external protons and maintains the internal concentration of potassium under toxic levels. This is K(+)/H(+) antiporter NhaP2 from Shewanella oneidensis (strain ATCC 700550 / JCM 31522 / CIP 106686 / LMG 19005 / NCIMB 14063 / MR-1).